We begin with the raw amino-acid sequence, 84 residues long: MKVVLLVCLVWMMAMMELVSCECWSQADCSDGHCCAGSSFSENCRPYGGDGEQCEPRNKYEVYSTGCPCEENLMCSVINRCQSA.

Positions 1-21 (MKVVLLVCLVWMMAMMELVSC) are cleaved as a signal peptide. Cystine bridges form between Cys23–Cys35, Cys29–Cys44, Cys34–Cys67, Cys54–Cys75, and Cys69–Cys81.

It belongs to the AVIT (prokineticin) family. In terms of tissue distribution, expressed by the venom gland.

The protein localises to the secreted. This Cyriopagopus hainanus (Chinese bird spider) protein is U8-theraphotoxin-Hhn1g.